The following is a 185-amino-acid chain: Transcription termination/antitermination protein NusG (185 aa).

One can recognise a KOW domain in the interval 134–163 (VGQQVRIVEGPFATFSGEVEEVMSERNKVR).

This sequence belongs to the NusG family.

Functionally, participates in transcription elongation, termination and antitermination. The polypeptide is Transcription termination/antitermination protein NusG (Treponema pallidum (strain Nichols)).